The primary structure comprises 332 residues: Sphingolipid delta(4)-desaturase DES1-like (332 aa).

3 consecutive transmembrane segments (helical) span residues 55–75 (PWAFLKITLVVILQLSTAAIL), 83–103 (ILSIAYFFGSFLNHNLFLAIH), and 119–139 (CLGIFANLPIGVPMSVTFQKY). The Histidine box-1 signature appears at 103–107 (HELSH). The Histidine box-2 motif lies at 140–144 (HLEHH). The next 3 helical transmembrane spans lie at 164–184 (LVTNIFAKTIWVFLQLFFYAL), 197–217 (WEFINFLIQIVLDVSVVLFFG), and 222–242 (AYLILSTFVGGGMHPMAGHFI). The short motif at 271–275 (HNEHH) is the Histidine box-3 element.

This sequence belongs to the fatty acid desaturase type 1 family. DEGS subfamily. Specifically expressed in flowers.

The protein localises to the endoplasmic reticulum membrane. It catalyses the reaction an N-acylsphinganine + 2 Fe(II)-[cytochrome b5] + O2 + 2 H(+) = an N-acylsphing-4-enine + 2 Fe(III)-[cytochrome b5] + 2 H2O. In terms of biological role, sphingolipid-delta-4-desaturase required for the biosynthesis of delta-4-unsaturated sphingolipids and derivatives. May be required for the biosynthesis of glucosylceramides. This Arabidopsis thaliana (Mouse-ear cress) protein is Sphingolipid delta(4)-desaturase DES1-like.